We begin with the raw amino-acid sequence, 156 residues long: Transcription elongation factor GreA (156 aa).

Residues 46 to 73 (AEYHAAREKQSFIEGRIKELEALLSLAE) are a coiled coil.

Belongs to the GreA/GreB family.

Its function is as follows. Necessary for efficient RNA polymerase transcription elongation past template-encoded arresting sites. The arresting sites in DNA have the property of trapping a certain fraction of elongating RNA polymerases that pass through, resulting in locked ternary complexes. Cleavage of the nascent transcript by cleavage factors such as GreA or GreB allows the resumption of elongation from the new 3'terminus. GreA releases sequences of 2 to 3 nucleotides. The protein is Transcription elongation factor GreA of Cereibacter sphaeroides (strain ATCC 17025 / ATH 2.4.3) (Rhodobacter sphaeroides).